A 390-amino-acid polypeptide reads, in one-letter code: Oxysterol-binding protein 10 (390 aa).

It belongs to the OSBP family.

This Dictyostelium discoideum (Social amoeba) protein is Oxysterol-binding protein 10 (osbJ).